Here is a 248-residue protein sequence, read N- to C-terminus: Ubiquinone biosynthesis O-methyltransferase (248 aa).

S-adenosyl-L-methionine is bound by residues arginine 41, glycine 72, aspartate 93, and methionine 136.

It belongs to the methyltransferase superfamily. UbiG/COQ3 family.

The enzyme catalyses a 3-demethylubiquinol + S-adenosyl-L-methionine = a ubiquinol + S-adenosyl-L-homocysteine + H(+). It carries out the reaction a 3-(all-trans-polyprenyl)benzene-1,2-diol + S-adenosyl-L-methionine = a 2-methoxy-6-(all-trans-polyprenyl)phenol + S-adenosyl-L-homocysteine + H(+). It functions in the pathway cofactor biosynthesis; ubiquinone biosynthesis. In terms of biological role, O-methyltransferase that catalyzes the 2 O-methylation steps in the ubiquinone biosynthetic pathway. In Brucella anthropi (strain ATCC 49188 / DSM 6882 / CCUG 24695 / JCM 21032 / LMG 3331 / NBRC 15819 / NCTC 12168 / Alc 37) (Ochrobactrum anthropi), this protein is Ubiquinone biosynthesis O-methyltransferase.